The chain runs to 713 residues: G-protein coupled receptor-associated protein LMBRD2 (713 aa).

The Extracellular portion of the chain corresponds to 1–3 (MSG). Residues 4 to 21 (VALGIEIVSVFFLALFLL) traverse the membrane as a helical segment. Residues 22 to 32 (HRYGDFKKQHK) lie on the Cytoplasmic side of the membrane. The chain crosses the membrane as a helical span at residues 33-53 (LVIVGTLLAWYLCFLIVFIIP). The Extracellular portion of the chain corresponds to 54–122 (LDVSTTIYNR…SKPWSYIPRG (69 aa)). 2 N-linked (GlcNAc...) asparagine glycosylation sites follow: asparagine 76 and asparagine 89. A helical membrane pass occupies residues 123–143 (IMPIFWRVVYWTSQFLTWILM). Topologically, residues 144–167 (PFMQSYARSGGFSITGKIKTALIE) are cytoplasmic. The chain crosses the membrane as a helical span at residues 168-188 (NAIYYGTYLLIFGALLIYVAV). The Extracellular segment spans residues 189–203 (NPNLHLEWYQLQTIG). Residues 204 to 224 (IAAANTWGLFLLVLLMGYGLV) form a helical membrane-spanning segment. Residues 225–404 (EIPRSQWNGA…ECLLRPWCSR (180 aa)) are Cytoplasmic-facing. Positions 246 to 314 (KAAKLMTEKA…DDYEDFEEKN (69 aa)) form a coiled coil. The chain crosses the membrane as a helical span at residues 405–425 (ILAVILALFSTVVVWSECTFF). Residues 426 to 449 (SAKPVLSLFAVFIQQAEQTHNYIY) are Extracellular-facing. Residues 450–470 (VEVVCFLSIFFLSICVYSTVF) form a helical membrane-spanning segment. Residues 471 to 490 (RIRVFNYYYLASHHQTDAYS) lie on the Cytoplasmic side of the membrane. A helical membrane pass occupies residues 491–511 (LLFSGMLFCRLTPPLCLNFLG). Residues 512–538 (LTHMDVSISHQNIEPTAYTSIMGSLRV) are Extracellular-facing. Residues 539–559 (LPLIADVFYIYYPMLVLILCI) traverse the membrane as a helical segment. Over 560–713 (ATYFSLGTRC…QSNSRIFDDV (154 aa)) the chain is Cytoplasmic. Residues 587–620 (DLTDEGKELIKREKRKRQRLEDGETRRREWKERY) adopt a coiled-coil conformation. Residues 600–713 (KRKRQRLEDG…QSNSRIFDDV (114 aa)) form a disordered region. Over residues 605–629 (RLEDGETRRREWKERYPTNREDTSR) the composition is skewed to basic and acidic residues. The segment covering 643-657 (TEMTTNRSSKYTRAS) has biased composition (polar residues). A compositionally biased stretch (basic and acidic residues) spans 658-667 (NRTERDRIEL). The segment covering 701-713 (SMSQSNSRIFDDV) has biased composition (polar residues).

This sequence belongs to the LIMR family.

The protein resides in the cell membrane. May associate with G-protein coupled receptors and regulate downstream signaling pathways. The polypeptide is G-protein coupled receptor-associated protein LMBRD2 (lmbrd2) (Xenopus laevis (African clawed frog)).